The sequence spans 356 residues: MRVLVAMSGGVDSSVAAARMVDAGHDVVGVHLALSSAPGTLRTGSRGCCSKEDASDARRVADILGIPFYVWDFADRFKDDVIDDFVESYARGETPNPCVRCNERIKFSALAARALALGFDAVATGHYARLSDGRLRRAVDADKDQSYVLGVLTAEQLRHALFPIGDTPKPQIRAEAAERGLAVAEKPDSHDICFIPTGDTKAFLGARIGVRPGAVVDGSGTVLAEHDGVHGFTIGQRKGLGIAGPGADGRPRYVTAIDAETGTVRVGPAEDLEVWELTGERPVFTSGVEPGGPIECQVQVRAHGGITDTVAELRDGKLELSLRAPLRGVAPGQTMVLYRPDPDGDEVIASATITRR.

ATP-binding positions include 6–13 (AMSGGVDS) and L32. The Nucleophile role is filled by C101. C101 and C193 are joined by a disulfide. G125 is a binding site for ATP. Residues 143–145 (KDQ) are interaction with tRNA. C193 acts as the Cysteine persulfide intermediate in catalysis.

The protein belongs to the MnmA/TRMU family.

The protein localises to the cytoplasm. The enzyme catalyses S-sulfanyl-L-cysteinyl-[protein] + uridine(34) in tRNA + AH2 + ATP = 2-thiouridine(34) in tRNA + L-cysteinyl-[protein] + A + AMP + diphosphate + H(+). In terms of biological role, catalyzes the 2-thiolation of uridine at the wobble position (U34) of tRNA, leading to the formation of s(2)U34. The sequence is that of tRNA-specific 2-thiouridylase MnmA from Mycolicibacterium smegmatis (strain ATCC 700084 / mc(2)155) (Mycobacterium smegmatis).